The following is an 833-amino-acid chain: MTALRPLSGRSRSLRCSSEKMEGTGSWDVLEWTKLDSASWSGSYSNLDCLLESERIIFEACGVILINTDEAGTLLLSNFRILFLSEGTRKLVPLGTIPFVAIEKFNKLAPKVQSNKYHNNENAPTRLLQVTGKDMRIVVYGFRPGTKQRHTVVDTLLRCNKPERVWDLYAFTCGPSQFGNTNPKERLLNEYFRLLGKSSQRASMNMIEDGSFTLSNDLWRITNLNSNYDLCQSYPFALMVPKSISDEELLQTSTFRARCRLPVISWCHPGSGAVIARSSQPLVGLMMNMRSNSDEKLVASFCTQLAGHKGARRKLYIVDARPRKNALANGAKGGGSESSSNYLQSEIVFLGIDNIHAMRESFSRLRDYLDMHGTTSSDGTSSFLRHGGWTWGGGNLSSMSASVSVLGDSGWLSHIQSILAGVAWIAARVAMESASVLVHCSDGWDRTTQLVSLACLLLDPYYRTFSGFQALVEKDWLSFGHPFSDRVGMPNVSESGNFELPIQSSSARSFPSSPVRQSPGSAAAQSSSSSYGLNNYSPIFLQWLDCISQLMRMYPSAFEFSPTFLVDFIDCLLSCRFGNFLCNSEKERQQCGISETCGCIWAYLADLRSSSGTSHVHCNPFYDPSRYDGPLLPPAAALAPTLWPQFHLRWACPVEPNVTETEDQCRAMTVKYSEMKKEKEEAERKVDELSSAMESLNEELLNERDISRAARESAKRATKERAVISRAVQSLGCKVKFTRNGDCTVEVEDGPQKCSHSIPQKQSEDNTTDVSESISSVTEQNVCEAVCPLRTREGTCRWPDAGCARIGNQFLGLKTNFEAFDNLCVYDSYFTAE.

The region spanning 42 to 109 is the GRAM domain; it reads GSYSNLDCLL…VAIEKFNKLA (68 aa). In terms of domain architecture, Myotubularin phosphatase spans 181–647; sequence TNPKERLLNE…LAPTLWPQFH (467 aa). Substrate-binding positions include 329–332, 354–355, 440–446, and arginine 486; these read NGAK, NI, and CSDGWDR. Residue cysteine 440 is the Phosphocysteine intermediate of the active site. Residues 503–530 form a disordered region; it reads QSSSARSFPSSPVRQSPGSAAAQSSSSS. Over residues 504-530 the composition is skewed to low complexity; it reads SSSARSFPSSPVRQSPGSAAAQSSSSS. Positions 660-717 form a coiled coil; sequence ETEDQCRAMTVKYSEMKKEKEEAERKVDELSSAMESLNEELLNERDISRAARESAKRA. Residues 753 to 772 are disordered; the sequence is KCSHSIPQKQSEDNTTDVSE.

It belongs to the protein-tyrosine phosphatase family. Non-receptor class myotubularin subfamily. In terms of tissue distribution, mostly expressed in flowers and roots, and, to a lower extent, in siliques and leaves.

Its subcellular location is the cytoplasm. The catalysed reaction is a 1,2-diacyl-sn-glycero-3-phospho-(1D-myo-inositol-3-phosphate) + H2O = a 1,2-diacyl-sn-glycero-3-phospho-(1D-myo-inositol) + phosphate. The enzyme catalyses a 1,2-diacyl-sn-glycero-3-phospho-(1D-myo-inositol-3,5-bisphosphate) + H2O = a 1,2-diacyl-sn-glycero-3-phospho-(1D-myo-inositol-5-phosphate) + phosphate. In terms of biological role, phosphatase with phosphoinositide 3'-phosphatase activity that can use phosphatidylinositol-3-phosphate (PtdIns3P) and phosphatidylinositol-3,5-diphosphate (PtdIns3,5P(2)) as substrates and produces phosphatidylinositol-5-phosphate (PtdIns5P); participates in pathway(s) that transfer gene regulatory signals to the nucleus. The sequence is that of Phosphatidylinositol-3-phosphatase myotubularin-2 (MTM2) from Arabidopsis thaliana (Mouse-ear cress).